The chain runs to 134 residues: Large ribosomal subunit protein uL14 (134 aa).

It belongs to the universal ribosomal protein uL14 family. As to quaternary structure, part of the 50S ribosomal subunit. Forms a cluster with proteins L3 and L19. In the 70S ribosome, L14 and L19 interact and together make contacts with the 16S rRNA in bridges B5 and B8.

Its function is as follows. Binds to 23S rRNA. Forms part of two intersubunit bridges in the 70S ribosome. The sequence is that of Large ribosomal subunit protein uL14 from Deinococcus geothermalis (strain DSM 11300 / CIP 105573 / AG-3a).